Consider the following 226-residue polypeptide: Purine nucleoside phosphorylase Cj1217c (226 aa).

Positions 58, 93, and 109 each coordinate Zn(2+).

It belongs to the purine nucleoside phosphorylase YfiH/LACC1 family. As to quaternary structure, homodimer. Cu(2+) is required as a cofactor. The cofactor is Zn(2+).

The catalysed reaction is adenosine + phosphate = alpha-D-ribose 1-phosphate + adenine. It catalyses the reaction S-methyl-5'-thioadenosine + phosphate = 5-(methylsulfanyl)-alpha-D-ribose 1-phosphate + adenine. The enzyme catalyses inosine + phosphate = alpha-D-ribose 1-phosphate + hypoxanthine. It carries out the reaction adenosine + H2O + H(+) = inosine + NH4(+). Purine nucleoside enzyme that catalyzes the phosphorolysis of adenosine and inosine nucleosides, yielding D-ribose 1-phosphate and the respective free bases, adenine and hypoxanthine. Also catalyzes the phosphorolysis of S-methyl-5'-thioadenosine into adenine and S-methyl-5-thio-alpha-D-ribose 1-phosphate. Also has adenosine deaminase activity. The chain is Purine nucleoside phosphorylase Cj1217c from Campylobacter jejuni subsp. jejuni serotype O:2 (strain ATCC 700819 / NCTC 11168).